A 161-amino-acid polypeptide reads, in one-letter code: MIHFVLLVSRQGKVRLTKWYSPYTQKERSKVIRELSGVILNRGPKLCNFIEWRGYKVVYKRYASLYFCMCIDEADNELEVLEIIHHYVEILDRYFGSVCELDLIFNFHKAYYILDELLIAGELQESSKKTVARIISAQDQLVEVAKEEASSISNIIAQATK.

It belongs to the adaptor complexes small subunit family. As to quaternary structure, adaptor protein complex 1 (AP-1) is a heterotetramer composed of two large adaptins (gamma-type subunit and beta-type subunit), a medium adaptin (mu-type subunit) and a small adaptin (sigma-type subunit). Expressed in seedlings, roots, stems, leaves, flowers and siliques (developing fruits and seeds).

The protein localises to the golgi apparatus. It localises to the cytoplasmic vesicle. It is found in the clathrin-coated vesicle membrane. Functionally, subunit of clathrin-associated adaptor protein complex 1 that plays a role in protein sorting at the trans-Golgi network and early endosomes (TGN/EE). The AP complexes mediate the recruitment of clathrin to membranes and the recognition of sorting signals within the cytosolic tails of transmembrane cargo molecules. The protein is AP-1 complex subunit sigma-1 (AAP19-1) of Arabidopsis thaliana (Mouse-ear cress).